Here is a 565-residue protein sequence, read N- to C-terminus: Adenine deaminase 1 (565 aa).

The protein belongs to the metallo-dependent hydrolases superfamily. Adenine deaminase family. Mn(2+) serves as cofactor.

The catalysed reaction is adenine + H2O + H(+) = hypoxanthine + NH4(+). This chain is Adenine deaminase 1, found in Rhizobium meliloti (strain 1021) (Ensifer meliloti).